We begin with the raw amino-acid sequence, 101 residues long: Small ribosomal subunit protein uS14 (101 aa).

It belongs to the universal ribosomal protein uS14 family. As to quaternary structure, part of the 30S ribosomal subunit. Contacts proteins S3 and S10.

Functionally, binds 16S rRNA, required for the assembly of 30S particles and may also be responsible for determining the conformation of the 16S rRNA at the A site. The chain is Small ribosomal subunit protein uS14 from Delftia acidovorans (strain DSM 14801 / SPH-1).